A 528-amino-acid chain; its full sequence is tRNA pseudouridine synthase 1 (528 aa).

Residues 1–59 (MPSDASTGYVDDQPGDEAYKRGALYKQTKARRADYDSDKEAKRPCTEDSDVALAGTSEE) are disordered. Positions 31–46 (RRADYDSDKEAKRPCT) are enriched in basic and acidic residues. Asp-126 serves as the catalytic Nucleophile. Polar residues-rich tracts occupy residues 486-495 (SSSPQENASP) and 506-528 (GDNT…QSDA). The interval 486–528 (SSSPQENASPEAQKAPETPAGDNTISAEQPKTATEVPTTQSDA) is disordered.

This sequence belongs to the tRNA pseudouridine synthase TruA family. Zn(2+) is required as a cofactor.

The protein localises to the nucleus. The enzyme catalyses a uridine in tRNA = a pseudouridine in tRNA. It catalyses the reaction uridine in snRNA = pseudouridine in snRNA. It carries out the reaction a uridine in mRNA = a pseudouridine in mRNA. In terms of biological role, formation of pseudouridine at positions 27 and 28 in the anticodon stem and loop of transfer RNAs; at positions 34 and 36 of intron-containing precursor tRNA(Ile) and at position 35 in the intron-containing tRNA(Tyr). Catalyzes pseudouridylation at position 44 in U2 snRNA. Also catalyzes pseudouridylation of mRNAs. This is tRNA pseudouridine synthase 1 (PUS1) from Eremothecium gossypii (strain ATCC 10895 / CBS 109.51 / FGSC 9923 / NRRL Y-1056) (Yeast).